The following is a 145-amino-acid chain: Methylglyoxal synthase (145 aa).

One can recognise an MGS-like domain in the interval 1 to 145 (MNSKKKIALV…YYQKIRKDNF (145 aa)). Residues His-12, Lys-16, 38-41 (TGTT), and 58-59 (SG) each bind substrate. The Proton donor/acceptor role is filled by Asp-64. Substrate is bound at residue His-91.

The protein belongs to the methylglyoxal synthase family.

The enzyme catalyses dihydroxyacetone phosphate = methylglyoxal + phosphate. Catalyzes the formation of methylglyoxal from dihydroxyacetone phosphate. The chain is Methylglyoxal synthase from Clostridium acetobutylicum (strain ATCC 824 / DSM 792 / JCM 1419 / IAM 19013 / LMG 5710 / NBRC 13948 / NRRL B-527 / VKM B-1787 / 2291 / W).